Here is a 448-residue protein sequence, read N- to C-terminus: L-seryl-tRNA(Sec) selenium transferase (448 aa).

Lys-284 carries the post-translational modification N6-(pyridoxal phosphate)lysine.

The protein belongs to the SelA family. Requires pyridoxal 5'-phosphate as cofactor.

The protein resides in the cytoplasm. It carries out the reaction L-seryl-tRNA(Sec) + selenophosphate + H(+) = L-selenocysteinyl-tRNA(Sec) + phosphate. The protein operates within aminoacyl-tRNA biosynthesis; selenocysteinyl-tRNA(Sec) biosynthesis; selenocysteinyl-tRNA(Sec) from L-seryl-tRNA(Sec) (bacterial route): step 1/1. In terms of biological role, converts seryl-tRNA(Sec) to selenocysteinyl-tRNA(Sec) required for selenoprotein biosynthesis. This Nautilia profundicola (strain ATCC BAA-1463 / DSM 18972 / AmH) protein is L-seryl-tRNA(Sec) selenium transferase.